Here is a 534-residue protein sequence, read N- to C-terminus: Serine/threonine-protein kinase ppk15 (534 aa).

Positions 1 to 40 (MDSDSPILPLSNNPPAARTHDHSQRNNHARHVSSSGTTLF) are disordered. 3 positions are modified to phosphoserine: Ser33, Ser56, and Ser60. The segment at 85 to 104 (FSSEQNPRRPLTKPSEGVHN) is disordered. One can recognise a Protein kinase domain in the interval 130–458 (YLILDTLGHG…PDQAKNHPFI (329 aa)). Residues 136-144 (LGHGTFGQV) and Lys159 each bind ATP. Catalysis depends on Asp257, which acts as the Proton acceptor. Tyr291 is subject to Phosphotyrosine.

Belongs to the protein kinase superfamily. Ser/Thr protein kinase family.

It localises to the cytoplasm. The protein resides in the cytoskeleton. Its subcellular location is the microtubule organizing center. The protein localises to the spindle pole body. The catalysed reaction is L-seryl-[protein] + ATP = O-phospho-L-seryl-[protein] + ADP + H(+). The enzyme catalyses L-threonyl-[protein] + ATP = O-phospho-L-threonyl-[protein] + ADP + H(+). The polypeptide is Serine/threonine-protein kinase ppk15 (ppk15) (Schizosaccharomyces pombe (strain 972 / ATCC 24843) (Fission yeast)).